Reading from the N-terminus, the 241-residue chain is Large ribosomal subunit protein uL13c (241 aa).

Residues 1–50 constitute a chloroplast transit peptide; sequence MAVLCSSSTVILSSSSVKSSGSERKSPFLGFSLTAISKPSVRVGIYANSK.

The protein belongs to the universal ribosomal protein uL13 family. Part of the 50S ribosomal subunit.

The protein resides in the plastid. It is found in the chloroplast. This Arabidopsis thaliana (Mouse-ear cress) protein is Large ribosomal subunit protein uL13c (RPL13).